The primary structure comprises 549 residues: Oxygen-dependent choline dehydrogenase (549 aa).

4 to 33 (DFVIIGSGSAGSAMAYRLSEDGRYSVIVIE) serves as a coordination point for FAD. His465 (proton acceptor) is an active-site residue.

Belongs to the GMC oxidoreductase family. FAD serves as cofactor.

It carries out the reaction choline + A = betaine aldehyde + AH2. It catalyses the reaction betaine aldehyde + NAD(+) + H2O = glycine betaine + NADH + 2 H(+). The protein operates within amine and polyamine biosynthesis; betaine biosynthesis via choline pathway; betaine aldehyde from choline (cytochrome c reductase route): step 1/1. In terms of biological role, involved in the biosynthesis of the osmoprotectant glycine betaine. Catalyzes the oxidation of choline to betaine aldehyde and betaine aldehyde to glycine betaine at the same rate. In Brucella anthropi (strain ATCC 49188 / DSM 6882 / CCUG 24695 / JCM 21032 / LMG 3331 / NBRC 15819 / NCTC 12168 / Alc 37) (Ochrobactrum anthropi), this protein is Oxygen-dependent choline dehydrogenase.